The primary structure comprises 429 residues: MGTIAIIAAVILGISFMTFVAFFGRLPALRNTPISFLHRLIWIHLPNGILTVDRTLTNGRLTTSLTRLGRHLWYDQHPTILIFFFLLLSVGEYLYLPVAWPHFSFTHKFFGTIAILCPYIFLYLSAYTDPGVINAKTHVREMARYPYDFTLFHPGTSCETCHLLKPARSKHCSICKKCVGRMDHHCIFINNCVGANNQRWFILLLLSTAILTLYGGVLGLVIIRAKIQARFPYWTLMPWWTSTQAWNSGDLDFHRWLLLWSWGLQSGVAMGGVTLLALLTTPLVWGLLGYHLWLVYCGTTTNESMKWQDWQAEMDEGGVYKRRMAADGSREKDLKVEPAWTRWPVEAEQIMVRTEDGKPPRSSHRLPGEGEWEAVWRLKDVENLYDIGFWDNLVDVFLPYFMFKESKGRSPVDEREFGRERGRNRRRSS.

Topologically, residues 1 to 3 (MGT) are lumenal. Residues 4-24 (IAIIAAVILGISFMTFVAFFG) form a helical membrane-spanning segment. Topologically, residues 25–79 (RLPALRNTPISFLHRLIWIHLPNGILTVDRTLTNGRLTTSLTRLGRHLWYDQHPT) are cytoplasmic. The chain crosses the membrane as a helical span at residues 80-100 (ILIFFFLLLSVGEYLYLPVAW). Residues 101–112 (PHFSFTHKFFGT) are Lumenal-facing. The chain crosses the membrane as a helical span at residues 113–133 (IAILCPYIFLYLSAYTDPGVI). Over 134 to 201 (NAKTHVREMA…CVGANNQRWF (68 aa)) the chain is Cytoplasmic. Positions 156-206 (TSCETCHLLKPARSKHCSICKKCVGRMDHHCIFINNCVGANNQRWFILLLL) constitute a DHHC domain. A helical transmembrane segment spans residues 202–222 (ILLLLSTAILTLYGGVLGLVI). Residues 223-274 (IRAKIQARFPYWTLMPWWTSTQAWNSGDLDFHRWLLLWSWGLQSGVAMGGVT) are Lumenal-facing. The chain crosses the membrane as a helical span at residues 275-295 (LLALLTTPLVWGLLGYHLWLV). The Cytoplasmic segment spans residues 296 to 429 (YCGTTTNESM…ERGRNRRRSS (134 aa)). Over residues 408-421 (GRSPVDEREFGRER) the composition is skewed to basic and acidic residues. The segment at 408 to 429 (GRSPVDEREFGRERGRNRRRSS) is disordered.

Belongs to the DHHC palmitoyltransferase family. SWF1 subfamily.

The protein localises to the endoplasmic reticulum membrane. It carries out the reaction L-cysteinyl-[protein] + hexadecanoyl-CoA = S-hexadecanoyl-L-cysteinyl-[protein] + CoA. Its function is as follows. Palmitoyltransferase that targets several endosomal SNAREs. Palmitoylates the SNAREs at cysteine residues close to the cytoplasmic end of their transmembrane domain. May have a role in the cellular quality control of transmembrane domain-containing proteins. The polypeptide is Palmitoyltransferase SWF1 (swf-1) (Neurospora crassa (strain ATCC 24698 / 74-OR23-1A / CBS 708.71 / DSM 1257 / FGSC 987)).